Reading from the N-terminus, the 268-residue chain is Putative esterase/lipase 1 (268 aa).

Residue H27 is part of the active site. The active-site Charge relay system is S94.

Belongs to the lipase/esterase LIP3/BchO family.

In Mycoplasma genitalium (strain ATCC 33530 / DSM 19775 / NCTC 10195 / G37) (Mycoplasmoides genitalium), this protein is Putative esterase/lipase 1.